The following is a 186-amino-acid chain: dTTP/UTP pyrophosphatase (186 aa).

Aspartate 66 (proton acceptor) is an active-site residue.

The protein belongs to the Maf family. YhdE subfamily. It depends on a divalent metal cation as a cofactor.

The protein resides in the cytoplasm. The catalysed reaction is dTTP + H2O = dTMP + diphosphate + H(+). The enzyme catalyses UTP + H2O = UMP + diphosphate + H(+). Nucleoside triphosphate pyrophosphatase that hydrolyzes dTTP and UTP. May have a dual role in cell division arrest and in preventing the incorporation of modified nucleotides into cellular nucleic acids. This Pyrococcus horikoshii (strain ATCC 700860 / DSM 12428 / JCM 9974 / NBRC 100139 / OT-3) protein is dTTP/UTP pyrophosphatase.